The following is a 1117-amino-acid chain: Centrosomal protein of 126 kDa (1117 aa).

The interval 1-42 (MLAGRPGTRSAVGELGTESSDNLDRAPLGPRESGGHHRPGSY) is disordered. A coiled-coil region spans residues 49–121 (LEKNLEEERQ…EEVTEKFQRA (73 aa)). Disordered regions lie at residues 643–664 (AENS…QQFH) and 730–759 (KKEE…IIRK). Basic and acidic residues predominate over residues 730–744 (KKEESKIPVHDDSKT). Residues 745-758 (KQGKPQRGRAKIIR) show a composition bias toward basic residues.

In terms of assembly, interacts with DCTN1. As to expression, expressed in brain, lung, skeletal muscle, kidney, pancreas, testis and ovary.

It localises to the midbody. The protein resides in the cytoplasm. Its subcellular location is the cytoskeleton. It is found in the microtubule organizing center. The protein localises to the centrosome. It localises to the cilium basal body. In terms of biological role, participates in cytokinesis. Necessary for microtubules and mitotic spindle organization. Involved in primary cilium formation. In Homo sapiens (Human), this protein is Centrosomal protein of 126 kDa.